The sequence spans 194 residues: uncharacterized protein (194 aa).

Positions 1-24 (MRKFVAFFVIVALAALLAGCGGQG) are cleaved as a signal peptide.

This is an uncharacterized protein from Archaeoglobus fulgidus (strain ATCC 49558 / DSM 4304 / JCM 9628 / NBRC 100126 / VC-16).